A 663-amino-acid chain; its full sequence is UvrABC system protein B (663 aa).

Residues 27-414 (KNIENGVKDQ…SDNHIAEQLI (388 aa)) enclose the Helicase ATP-binding domain. 40 to 47 (GVTGSGKT) provides a ligand contact to ATP. The short motif at 93–116 (YYDYYQPEAYIKTTDTYIEKDSSV) is the Beta-hairpin element. The Helicase C-terminal domain occupies 432 to 594 (QVDDLLDEIR…IDPKSIIKEI (163 aa)). The 36-residue stretch at 624 to 659 (EKEITKLEKKIKKLVEELDFEQAIILRDEMLKLKEL) folds into the UVR domain.

It belongs to the UvrB family. Forms a heterotetramer with UvrA during the search for lesions. Interacts with UvrC in an incision complex.

The protein resides in the cytoplasm. The UvrABC repair system catalyzes the recognition and processing of DNA lesions. A damage recognition complex composed of 2 UvrA and 2 UvrB subunits scans DNA for abnormalities. Upon binding of the UvrA(2)B(2) complex to a putative damaged site, the DNA wraps around one UvrB monomer. DNA wrap is dependent on ATP binding by UvrB and probably causes local melting of the DNA helix, facilitating insertion of UvrB beta-hairpin between the DNA strands. Then UvrB probes one DNA strand for the presence of a lesion. If a lesion is found the UvrA subunits dissociate and the UvrB-DNA preincision complex is formed. This complex is subsequently bound by UvrC and the second UvrB is released. If no lesion is found, the DNA wraps around the other UvrB subunit that will check the other stand for damage. This chain is UvrABC system protein B, found in Fusobacterium nucleatum subsp. nucleatum (strain ATCC 25586 / DSM 15643 / BCRC 10681 / CIP 101130 / JCM 8532 / KCTC 2640 / LMG 13131 / VPI 4355).